The following is a 341-amino-acid chain: L-threonine 3-dehydrogenase (341 aa).

Cys38 provides a ligand contact to Zn(2+). Active-site charge relay system residues include Thr40 and His43. Zn(2+)-binding residues include His63, Glu64, Cys93, Cys96, Cys99, and Cys107. NAD(+)-binding positions include Ile175, Asp195, Arg200, 262-264 (LGI), and 286-287 (IY).

This sequence belongs to the zinc-containing alcohol dehydrogenase family. Homotetramer. Zn(2+) is required as a cofactor.

Its subcellular location is the cytoplasm. It carries out the reaction L-threonine + NAD(+) = (2S)-2-amino-3-oxobutanoate + NADH + H(+). It participates in amino-acid degradation; L-threonine degradation via oxydo-reductase pathway; glycine from L-threonine: step 1/2. Functionally, catalyzes the NAD(+)-dependent oxidation of L-threonine to 2-amino-3-ketobutyrate. The polypeptide is L-threonine 3-dehydrogenase (Escherichia coli O127:H6 (strain E2348/69 / EPEC)).